Reading from the N-terminus, the 107-residue chain is MTFVVTDNCIKCKYTDCVEVCPVDCFYEGPNFLVIHPDECIDCALCEPECPAQAIFSEDEVPEDQQEFIELNADLAEVWPNITEKKDALADAEEWDGVKDKLQYLER.

4Fe-4S ferredoxin-type domains lie at 2-30 (TFVV…YEGP) and 31-60 (NFLV…SEDE). The [3Fe-4S] cluster site is built by Cys-9 and Cys-17. Positions 21, 40, 43, and 46 each coordinate [4Fe-4S] cluster. [3Fe-4S] cluster is bound at residue Cys-50.

The cofactor is [4Fe-4S] cluster. [3Fe-4S] cluster serves as cofactor.

In terms of biological role, ferredoxins are iron-sulfur proteins that transfer electrons in a wide variety of metabolic reactions. The polypeptide is Ferredoxin 1 (Stutzerimonas stutzeri (Pseudomonas stutzeri)).